The following is a 316-amino-acid chain: Nucleoprotein (316 aa).

Tyr-43, Tyr-46, Val-76, Arg-122, and Lys-240 together coordinate RNA.

This sequence belongs to the tenuiviruses nucleocapsid protein family.

It localises to the virion. The protein resides in the host cytoplasm. In terms of biological role, encapsidates the genome, protecting it from nucleases. The encapsidated genomic RNA is termed the nucleocapsid (NC), and serves as template for viral transcription and replication. In Maize stripe virus (MStV), this protein is Nucleoprotein.